The following is a 336-amino-acid chain: MEPRAIVLKLIEHKHISVEEAEFFMNRVMKGEVSEILLSSFVTAMRAKGESVDEVLGCTLALRKNALKPKTVFPFDLLDTCGTGGDGQGTINVSTLSAITLASLGVKVAKHGNRSVSSHTGSSDILARLGYQTEATQEEVEAHLISRGFTFLFAPMWHPSMKYAGSVRKELGFRTVFNMIGPLSNPFSPQFQIIGVYQPELTELFIKVLQYLGLKRALVCHSRDGLDEFSIFQTTDYTLLENEVISRHSFDPRTLGFSSLKREEVYADSSEHAEVLARRVLNSEPIAGTHAVALNAGAGLFVMGKVKTIEQGYKIAWEALLSGKTRKYFEDLISKE.

5-phospho-alpha-D-ribose 1-diphosphate contacts are provided by residues Gly-82, 85–86, Thr-90, 92–95, 110–118, and Ser-122; these read GD, NVST, and KHGNRSVSS. Gly-82 provides a ligand contact to anthranilate. Ser-94 provides a ligand contact to Mg(2+). Asn-113 is an anthranilate binding site. Residue Arg-168 participates in anthranilate binding. 2 residues coordinate Mg(2+): Asp-227 and Glu-228.

Belongs to the anthranilate phosphoribosyltransferase family. Homodimer. Mg(2+) serves as cofactor.

It carries out the reaction N-(5-phospho-beta-D-ribosyl)anthranilate + diphosphate = 5-phospho-alpha-D-ribose 1-diphosphate + anthranilate. It participates in amino-acid biosynthesis; L-tryptophan biosynthesis; L-tryptophan from chorismate: step 2/5. Catalyzes the transfer of the phosphoribosyl group of 5-phosphorylribose-1-pyrophosphate (PRPP) to anthranilate to yield N-(5'-phosphoribosyl)-anthranilate (PRA). This Leptospira borgpetersenii serovar Hardjo-bovis (strain JB197) protein is Anthranilate phosphoribosyltransferase.